A 933-amino-acid polypeptide reads, in one-letter code: Progesterone receptor (933 aa).

The segment at 1–164 (MTELKAKGPR…PATQRVLSPL (164 aa)) is AF3; mediates transcriptional activation. Residues 1-256 (MTELKAKGPR…AAAGGGAAAV (256 aa)) are disordered. The modulating, Pro-Rich stretch occupies residues 1–566 (MTELKAKGPR…YSFESLPQKI (566 aa)). S20 carries the phosphoserine modification. Short sequence motifs (LXXL motif) lie at residues 55–59 (LDGLL) and 115–119 (LDTLL). Phosphoserine occurs at positions 130 and 162. The mediates transcriptional transrepression stretch occupies residues 165–305 (MSRSGGKAGD…LATTTMDFIH (141 aa)). The Nuclear localization signal signature appears at 183-187 (KVLPR). Residues S190 and S213 each carry the phosphoserine modification. A compositionally biased stretch (acidic residues) spans 220–231 (EVEEEDGSESED). S294 is modified (phosphoserine; by MAPK1). Positions 332–380 (GAGAASAFAPPRSSPSASSTPVAVGDFPDCAYPPDADPKDDAYPLYGDF) are disordered. Positions 335-350 (AASAFAPPRSSPSASS) are enriched in low complexity. S345 carries the phosphoserine; by MAPK modification. K388 is covalently cross-linked (Glycyl lysine isopeptide (Lys-Gly) (interchain with G-Cter in SUMO); alternate). K388 is covalently cross-linked (Glycyl lysine isopeptide (Lys-Gly) (interchain with G-Cter in ubiquitin); alternate). Position 400 is a phosphoserine; by CDK2 (S400). Positions 415-454 (PDFPLGPPPPLPPRAPPSRPGEAAVTAAPASASVSSSSSS) are disordered. Positions 418–433 (PLGPPPPLPPRAPPSR) are enriched in pro residues. Residues 434-454 (PGEAAVTAAPASASVSSSSSS) are compositionally biased toward low complexity. The AF1; mediates transcriptional activation stretch occupies residues 456–546 (STLECILYKA…VYPPYLNYLR (91 aa)). K531 participates in a covalent cross-link: Glycyl lysine isopeptide (Lys-Gly) (interchain with G-Cter in SUMO). 2 NR C4-type zinc fingers span residues 567–587 (CLIC…CGSC) and 603–627 (CAGR…LRKC). The nuclear receptor DNA-binding region spans 567-639 (CLICGDEASG…AGMVLGGRKF (73 aa)). A Phosphoserine modification is found at S676. The 235-residue stretch at 679–913 (QDIQFFPPLI…EFPEMMSEVI (235 aa)) folds into the NR LBD domain. The interval 687–933 (LINLLVSIEP…MVKPLLFHKK (247 aa)) is AF2; mediates transcriptional activation. A progesterone-binding site is contributed by R766.

This sequence belongs to the nuclear hormone receptor family. Interacts with SMARD1 and UNC45A. Interacts with CUEDC2; the interaction promotes ubiquitination, decreases sumoylation, and represses transcriptional activity. Interacts with PIAS3; the interaction promotes sumoylation of PR in a hormone-dependent manner, inhibits DNA-binding, and alters nuclear export. Interacts with SP1; the interaction requires ligand-induced phosphorylation on Ser-345 by ERK1/2-MAPK. Interacts with PRMT2. Interacts with NCOA2 and NCOA1. Interacts with KLF9. Interacts with GTF2B. In terms of processing, phosphorylated on multiple serine sites. Several of these sites are hormone-dependent. Phosphorylation on Ser-294 is highly hormone-dependent and modulates ubiquitination and sumoylation on Lys-388. Phosphorylation on Ser-345 also requires induction by hormone. Basal phosphorylation on Ser-162, Ser-190 and Ser-400 is increased in response to progesterone and can be phosphorylated in vitro by the CDK2-A1 complex. Increased levels of phosphorylation on Ser-400 also in the presence of EGF, heregulin, IGF, PMA and FBS. Phosphorylation at this site by CDK2 is ligand-independent, and increases nuclear translocation and transcriptional activity. Phosphorylation at Ser-162 and Ser-294, but not at Ser-190, is impaired during the G(2)/M phase of the cell cycle. Phosphorylation on Ser-345 by ERK1/2 MAPK is required for interaction with SP1. Sumoylation is hormone-dependent and represses transcriptional activity. Sumoylation on all three sites is enhanced by PIAS3. Desumoylated by SENP1. Sumoylation on Lys-388, the main site of sumoylation, is repressed by ubiquitination on the same site, and modulated by phosphorylation at Ser-294. Post-translationally, ubiquitination is hormone-dependent and represses sumoylation on the same site. Promoted by MAPK-mediated phosphorylation on Ser-294. Ubiquitinated by UBR5, leading to its degradation: UBR5 specifically recognizes and binds ligand-bound PGR when it is not associated with coactivators (NCOAs). In presence of NCOAs, the UBR5-degron is not accessible, preventing its ubiquitination and degradation. In terms of processing, palmitoylated by ZDHHC7 and ZDHHC21. Palmitoylation is required for plasma membrane targeting and for rapid intracellular signaling via ERK and AKT kinases and cAMP generation.

The protein resides in the nucleus. The protein localises to the cytoplasm. Functionally, the steroid hormones and their receptors are involved in the regulation of eukaryotic gene expression and affect cellular proliferation and differentiation in target tissues. Transcriptional activator of several progesteron-dependent promoters in a variety of cell types. Involved in activation of SRC-dependent MAPK signaling on hormone stimulation. The polypeptide is Progesterone receptor (PGR) (Chlorocebus aethiops (Green monkey)).